The primary structure comprises 848 residues: Aryl hydrocarbon receptor (848 aa).

Residues 1-9 (MSSGANITY) constitute a propeptide that is removed on maturation. Residues 1 to 38 (MSSGANITYASRKRRKPVQKTVKPIPAEGIKSNPSKRH) form a disordered region. 2 consecutive short sequence motifs (nuclear localization signal) follow at residues 12–15 (RKRR) and 36–41 (KRHRDR). The bHLH domain maps to 26–79 (PAEGIKSNPSKRHRDRLNTELDRLASLLPFPQDVINKLDKLSVLRLSVSYLRAK). A DNA-binding region spans residues 37–65 (RHRDRLNTELDRLASLLPFPQDVINKLDK). Required for maintaining the overall integrity of the AHR:ARNT heterodimer and its transcriptional activity stretches follow at residues 49 to 81 (LASLLPFPQDVINKLDKLSVLRLSVSYLRAKSF), 116 to 124 (LLQALNGFV), and 260 to 262 (FAI). Residues 63–71 (LDKLSVLRL) carry the Nuclear export signal motif. One can recognise a PAS 1 domain in the interval 111 to 175 (QEGEFLLQAL…AEFQRQLHWA (65 aa)). Residues 266-336 (LQPPSILEIR…CAESHIRMIK (71 aa)) enclose the PAS 2 domain. The region spanning 342–383 (MTVFRLLAKHSRWRWVQSNARLIYRNGRPDYIIVTQRPLTDE) is the PAC domain. The segment at 421-449 (LPIRTKSNTSRKDWAPQSTPSKDSFHPSS) is disordered. Residues 436 to 449 (PQSTPSKDSFHPSS) are compositionally biased toward polar residues.

Homodimer. Heterodimer; efficient DNA binding requires dimerization with another bHLH protein. Interacts with ARNT; the heterodimer ARNT:AHR binds to core DNA sequence 5'-TGCGTG-3' within the dioxin response element (DRE) of target gene promoters and activates their transcription. Binds MYBBP1A. Interacts with coactivators including SRC-1, RIP140 and NOCA7, and with the corepressor SMRT. Interacts with NEDD8 and IVNS1ABP. Interacts with BMAL1. Interacts with HSP90AB1. Interacts with TIPARP; leading to mono-ADP-ribosylation of AHR and subsequent inhibition of AHR. Post-translationally, mono-ADP-ribosylated, leading to inhibit transcription activator activity of AHR.

The protein localises to the cytoplasm. Its subcellular location is the nucleus. In terms of biological role, ligand-activated transcription factor that enables cells to adapt to changing conditions by sensing compounds from the environment, diet, microbiome and cellular metabolism, and which plays important roles in development, immunity and cancer. Upon ligand binding, translocates into the nucleus, where it heterodimerizes with ARNT and induces transcription by binding to xenobiotic response elements (XRE). Regulates a variety of biological processes, including angiogenesis, hematopoiesis, drug and lipid metabolism, cell motility and immune modulation. Xenobiotics can act as ligands: upon xenobiotic-binding, activates the expression of multiple phase I and II xenobiotic chemical metabolizing enzyme genes (such as the CYP1A1 gene). Mediates biochemical and toxic effects of halogenated aromatic hydrocarbons. Next to xenobiotics, natural ligands derived from plants, microbiota, and endogenous metabolism are potent AHR agonists. Tryptophan (Trp) derivatives constitute an important class of endogenous AHR ligands. Acts as a negative regulator of anti-tumor immunity: indoles and kynurenic acid generated by Trp catabolism act as ligand and activate AHR, thereby promoting AHR-driven cancer cell motility and suppressing adaptive immunity. Regulates the circadian clock by inhibiting the basal and circadian expression of the core circadian component PER1. Inhibits PER1 by repressing the CLOCK-BMAL1 heterodimer mediated transcriptional activation of PER1. The heterodimer ARNT:AHR binds to core DNA sequence 5'-TGCGTG-3' within the dioxin response element (DRE) of target gene promoters and activates their transcription. The protein is Aryl hydrocarbon receptor (Ahr) of Mus musculus castaneus (Southeastern Asian house mouse).